Consider the following 550-residue polypeptide: Small ribosomal subunit protein uS3m (550 aa).

Residues 112 to 133 (NDDTEEERNEVGGRGAGKRVES) are disordered.

Belongs to the universal ribosomal protein uS3 family.

It is found in the mitochondrion. This chain is Small ribosomal subunit protein uS3m (RPS3), found in Oenothera berteroana (Bertero's evening primrose).